The following is a 347-amino-acid chain: Dihydroorotate dehydrogenase (quinone) (347 aa).

FMN-binding positions include 62–66 (AGLDK) and threonine 86. Lysine 66 contributes to the substrate binding site. 111-115 (NRMGF) lines the substrate pocket. FMN contacts are provided by asparagine 142 and asparagine 175. Asparagine 175 contributes to the substrate binding site. Residue serine 178 is the Nucleophile of the active site. Asparagine 180 lines the substrate pocket. FMN-binding residues include lysine 220 and threonine 248. Residue 249–250 (NT) coordinates substrate. Residues glycine 271, glycine 300, and 321–322 (YS) each bind FMN.

This sequence belongs to the dihydroorotate dehydrogenase family. Type 2 subfamily. As to quaternary structure, monomer. The cofactor is FMN.

The protein resides in the cell membrane. The catalysed reaction is (S)-dihydroorotate + a quinone = orotate + a quinol. It participates in pyrimidine metabolism; UMP biosynthesis via de novo pathway; orotate from (S)-dihydroorotate (quinone route): step 1/1. Its function is as follows. Catalyzes the conversion of dihydroorotate to orotate with quinone as electron acceptor. The chain is Dihydroorotate dehydrogenase (quinone) from Dechloromonas aromatica (strain RCB).